The primary structure comprises 77 residues: Acyl carrier protein (77 aa).

The Carrier domain maps to methionine 1–glutamine 76. Position 36 is an O-(pantetheine 4'-phosphoryl)serine (serine 36).

It belongs to the acyl carrier protein (ACP) family. In terms of processing, 4'-phosphopantetheine is transferred from CoA to a specific serine of apo-ACP by AcpS. This modification is essential for activity because fatty acids are bound in thioester linkage to the sulfhydryl of the prosthetic group.

Its subcellular location is the cytoplasm. It functions in the pathway lipid metabolism; fatty acid biosynthesis. Functionally, carrier of the growing fatty acid chain in fatty acid biosynthesis. In Chlamydia caviae (strain ATCC VR-813 / DSM 19441 / 03DC25 / GPIC) (Chlamydophila caviae), this protein is Acyl carrier protein.